Consider the following 478-residue polypeptide: Methionine aminopeptidase 2 (478 aa).

The interval methionine 1–aspartate 122 is disordered. Alanine 2 carries the N-acetylalanine modification. Residues lysine 36–lysine 46 show a composition bias toward basic residues. The residue at position 60 (serine 60) is a Phosphoserine; alternate. The O-linked (GlcNAc) serine; alternate glycan is linked to serine 60. Residues glutamate 80–alanine 92 are compositionally biased toward acidic residues. Over residues glycine 97 to proline 109 the composition is skewed to basic residues. Histidine 231 is a binding site for substrate. Aspartate 251, aspartate 262, and histidine 331 together coordinate a divalent metal cation. A substrate-binding site is contributed by histidine 339. Positions 364 and 459 each coordinate a divalent metal cation.

This sequence belongs to the peptidase M24A family. Methionine aminopeptidase eukaryotic type 2 subfamily. Binds EIF2S1 at low magnesium concentrations. Interacts strongly with the eIF-2 gamma-subunit EIF2S3. Requires Co(2+) as cofactor. The cofactor is Zn(2+). Mn(2+) serves as cofactor. Fe(2+) is required as a cofactor. Post-translationally, contains approximately 12 O-linked N-acetylglucosamine (GlcNAc) residues. O-glycosylation is required for EIF2S1 binding.

It localises to the cytoplasm. The catalysed reaction is Release of N-terminal amino acids, preferentially methionine, from peptides and arylamides.. In terms of biological role, cotranslationally removes the N-terminal methionine from nascent proteins. The N-terminal methionine is often cleaved when the second residue in the primary sequence is small and uncharged (Met-Ala-, Cys, Gly, Pro, Ser, Thr, or Val). Its function is as follows. Protects eukaryotic initiation factor EIF2S1 from translation-inhibiting phosphorylation by inhibitory kinases such as EIF2AK2/PKR and EIF2AK1/HCR. Plays a critical role in the regulation of protein synthesis. The chain is Methionine aminopeptidase 2 (Metap2) from Mus musculus (Mouse).